Here is a 255-residue protein sequence, read N- to C-terminus: Thiazole synthase (255 aa).

The active-site Schiff-base intermediate with DXP is lysine 96. Residues glycine 157, 184–185 (AG), and 206–207 (NT) each bind 1-deoxy-D-xylulose 5-phosphate.

The protein belongs to the ThiG family. In terms of assembly, homotetramer. Forms heterodimers with either ThiH or ThiS.

It localises to the cytoplasm. The catalysed reaction is [ThiS sulfur-carrier protein]-C-terminal-Gly-aminoethanethioate + 2-iminoacetate + 1-deoxy-D-xylulose 5-phosphate = [ThiS sulfur-carrier protein]-C-terminal Gly-Gly + 2-[(2R,5Z)-2-carboxy-4-methylthiazol-5(2H)-ylidene]ethyl phosphate + 2 H2O + H(+). The protein operates within cofactor biosynthesis; thiamine diphosphate biosynthesis. In terms of biological role, catalyzes the rearrangement of 1-deoxy-D-xylulose 5-phosphate (DXP) to produce the thiazole phosphate moiety of thiamine. Sulfur is provided by the thiocarboxylate moiety of the carrier protein ThiS. In vitro, sulfur can be provided by H(2)S. This Clostridium acetobutylicum (strain ATCC 824 / DSM 792 / JCM 1419 / IAM 19013 / LMG 5710 / NBRC 13948 / NRRL B-527 / VKM B-1787 / 2291 / W) protein is Thiazole synthase.